We begin with the raw amino-acid sequence, 254 residues long: uncharacterized protein (254 aa).

This sequence belongs to the MtxX family.

This is an uncharacterized protein from Methanopyrus kandleri (strain AV19 / DSM 6324 / JCM 9639 / NBRC 100938).